A 184-amino-acid polypeptide reads, in one-letter code: Ethylene-responsive transcription factor ERF024 (184 aa).

Positions 1-21 are disordered; the sequence is MQGTSKDNGGRHPLYRGVRQR. Positions 14–72 form a DNA-binding region, AP2/ERF; sequence LYRGVRQRKNSNKWVSEIREPRKPNRIWLGTFSTPEMAAIAYDVAALALKGSQAELNFP.

It belongs to the AP2/ERF transcription factor family. ERF subfamily.

The protein localises to the nucleus. In terms of biological role, probably acts as a transcriptional activator. Binds to the GCC-box pathogenesis-related promoter element. May be involved in the regulation of gene expression by stress factors and by components of stress signal transduction pathways. The polypeptide is Ethylene-responsive transcription factor ERF024 (ERF024) (Arabidopsis thaliana (Mouse-ear cress)).